The sequence spans 258 residues: Proliferating cell nuclear antigen (258 aa).

A DNA-binding region spans residues 61-80 (RCDHPVTLGMDLTSLSKILR). A Glycyl lysine isopeptide (Lys-Gly) (interchain with G-Cter in SUMO) cross-link involves residue Lys127. Lys164 is covalently cross-linked (Glycyl lysine isopeptide (Lys-Gly) (interchain with G-Cter in SUMO); alternate). Residue Lys164 forms a Glycyl lysine isopeptide (Lys-Gly) (interchain with G-Cter in ubiquitin); alternate linkage.

Belongs to the PCNA family. As to quaternary structure, homotrimer. Interacts with RAD30. Interacts with MCM10. Interacts with UBP10. Post-translationally, sumoylated on Lys-164, and to a lesser extent on Lys-127 by the UBC9/SIZ1 complex during S-phase; which impairs ubiquitination and function in DNA repair. In terms of processing, monoubiquitinated on Lys-164 by the UBC2/RAD18 complex upon DNA damage, and then polyubiquitinated through 'Lys-63'-linkage by UBC13/MMS2. Ubiquitination is required for UBC2-mediated DNA repair. Lys-164 is deubiquitinated by UBP10.

It is found in the nucleus. In terms of biological role, this protein is an auxiliary protein of DNA polymerase delta and is involved in the control of eukaryotic DNA replication by increasing the polymerase's processibility during elongation of the leading strand. Involved in DNA repair. The sequence is that of Proliferating cell nuclear antigen (POL30) from Saccharomyces cerevisiae (strain ATCC 204508 / S288c) (Baker's yeast).